Reading from the N-terminus, the 427-residue chain is Trigger factor (427 aa).

The region spanning 163-248 (GDTVVIDFVG…IHEVKAKEVP (86 aa)) is the PPIase FKBP-type domain.

This sequence belongs to the FKBP-type PPIase family. Tig subfamily.

It is found in the cytoplasm. The enzyme catalyses [protein]-peptidylproline (omega=180) = [protein]-peptidylproline (omega=0). Functionally, involved in protein export. Acts as a chaperone by maintaining the newly synthesized protein in an open conformation. Functions as a peptidyl-prolyl cis-trans isomerase. The protein is Trigger factor of Streptococcus pneumoniae (strain 70585).